The chain runs to 328 residues: Probable cell division protein WhiA (328 aa).

The H-T-H motif DNA-binding region spans 276-309 (SLEELGRLADPQMTKDAVAGRIRRLLHMADKKAS).

It belongs to the WhiA family.

Its function is as follows. Involved in cell division and chromosome segregation. The protein is Probable cell division protein WhiA of Corynebacterium diphtheriae (strain ATCC 700971 / NCTC 13129 / Biotype gravis).